The chain runs to 1387 residues: DNA-directed RNA polymerase subunit beta (1387 aa).

It belongs to the RNA polymerase beta chain family. In terms of assembly, the RNAP catalytic core consists of 2 alpha, 1 beta, 1 beta' and 1 omega subunit. When a sigma factor is associated with the core the holoenzyme is formed, which can initiate transcription.

It carries out the reaction RNA(n) + a ribonucleoside 5'-triphosphate = RNA(n+1) + diphosphate. In terms of biological role, DNA-dependent RNA polymerase catalyzes the transcription of DNA into RNA using the four ribonucleoside triphosphates as substrates. The polypeptide is DNA-directed RNA polymerase subunit beta (Xanthomonas campestris pv. campestris (strain 8004)).